Here is a 311-residue protein sequence, read N- to C-terminus: Glycine-betaine-binding protein (311 aa).

An N-terminal signal peptide occupies residues 1 to 23; sequence MNRLIRSLCLACAGLFAAGLAQA.

This sequence belongs to the OsmX family.

It is found in the periplasm. Functionally, binds glycine-betaine. The polypeptide is Glycine-betaine-binding protein (Pseudomonas aeruginosa (strain ATCC 15692 / DSM 22644 / CIP 104116 / JCM 14847 / LMG 12228 / 1C / PRS 101 / PAO1)).